The primary structure comprises 752 residues: DNA helicase/primase complex-associated protein (752 aa).

The protein belongs to the herpesviridae HEPA family. In terms of assembly, associates with the primase and the helicase to form the helicase-primase complex. Interacts with the origin-binding protein. Interacts with the polymerase catalytic subunit.

It is found in the host nucleus. Functionally, component of the helicase/primase complex. Unwinds the DNA at the replication forks and generates single-stranded DNA for both leading and lagging strand synthesis. The primase synthesizes short RNA primers on the lagging strand that the polymerase presumably elongates using dNTPs. The primase-associated factor has no known catalytic activity in the complex and may serve to facilitate the formation of the replisome by directly interacting with the origin-binding protein and the polymerase. In Homo sapiens (Human), this protein is DNA helicase/primase complex-associated protein.